A 65-amino-acid chain; its full sequence is Large ribosomal subunit protein bL35 (65 aa).

This sequence belongs to the bacterial ribosomal protein bL35 family.

The chain is Large ribosomal subunit protein bL35 from Burkholderia ambifaria (strain MC40-6).